The primary structure comprises 689 residues: MPRTPKNQNLEQNTQTQSLTDLVYPESTGIPVPEYLGTVDKLPDNTEEVPQPKRRGRKPNPKTKARKEPALEQNVQAETEPEFQEKKQPVDGIAAAEKRLAEQYGVANIDAIAEPIYTGEQNYKPAESTEENAFVSENTSEAVIPQNGDMAQAQAENQGEVATDQNADPNAQQQGEAQAQNGEGQDDRRFNNQNGKFNKFNKNNKFNKNNRNNRNFQQQEEFVDDSATLPAPGSEAILKAKENWLKFRKLSMSELQELAVQKEVDFRRMRKQSLNYILQSLENEGNIIYTEGVLEVTPQGHGFLRMPDQNYQTSADDVYVSQNLIRKFNLKIGDTIEGLVRTPRDQDKYFSMRRIDRVNFEEPDKMRRRVAFEYLTPIHPEEKIHLEWNETEYSTRIMDLFSPIGKGQRSIILAPPRTGKTVLLQNVTRAIAKNHPEIILITLLIDERPEEVTEMRDIITDIKEKAAEKGIEIKAEVVASTFDEPPEHHTRVANMVLEKAKRLVESQKDVVILLDSITRFARANNVVIPHSGKILSGGVDANAMQFPKKFFGAARKIQDKIRTVKNEDGTISEEVQKNGSLTIIGTALIETGSRMDEVIFEEFKGTGNMELVLDRRIAEKRIWPAIDVFKSGTRKEERLLTLLEQNAAWNFRRGSQNETETGIMENLLKLMSKLKTNAELLAVLSKPKV.

A compositionally biased stretch (polar residues) spans 1–20 (MPRTPKNQNLEQNTQTQSLT). 2 disordered regions span residues 1–90 (MPRT…KQPV) and 151–213 (AQAQ…NRNN). The segment covering 52 to 65 (PKRRGRKPNPKTKA) has biased composition (basic residues). 2 stretches are compositionally biased toward low complexity: residues 170–183 (NAQQ…QNGE) and 191–213 (NNQN…NRNN). A Rho RNA-BD domain is found at 287-362 (IIYTEGVLEV…RRIDRVNFEE (76 aa)). ATP is bound by residues 405 to 410 (GKGQRS), 417 to 422 (RTGKTV), and R448.

This sequence belongs to the Rho family. In terms of assembly, homohexamer. The homohexamer assembles into an open ring structure.

In terms of biological role, facilitates transcription termination by a mechanism that involves Rho binding to the nascent RNA, activation of Rho's RNA-dependent ATPase activity, and release of the mRNA from the DNA template. The protein is Transcription termination factor Rho of Fibrobacter succinogenes (strain ATCC 19169 / S85).